The primary structure comprises 588 residues: Aspartate--tRNA ligase (588 aa).

E174 is an L-aspartate binding site. Residues 198–201 (QLFK) are aspartate. Position 220 (R220) interacts with L-aspartate. Residues 220-222 (RDE) and Q229 each bind ATP. H448 contacts L-aspartate. Residue E482 coordinates ATP. R489 provides a ligand contact to L-aspartate. Residue 534–537 (GIDR) coordinates ATP.

The protein belongs to the class-II aminoacyl-tRNA synthetase family. Type 1 subfamily. As to quaternary structure, homodimer.

The protein localises to the cytoplasm. The enzyme catalyses tRNA(Asp) + L-aspartate + ATP = L-aspartyl-tRNA(Asp) + AMP + diphosphate. In terms of biological role, catalyzes the attachment of L-aspartate to tRNA(Asp) in a two-step reaction: L-aspartate is first activated by ATP to form Asp-AMP and then transferred to the acceptor end of tRNA(Asp). This is Aspartate--tRNA ligase from Xanthomonas campestris pv. campestris (strain B100).